Here is a 61-residue protein sequence, read N- to C-terminus: Protein TfaX (61 aa).

It belongs to the tfa family.

Functionally, might play a role in cell growth during glycolysis. The chain is Protein TfaX (tfaX) from Escherichia coli (strain K12).